A 732-amino-acid chain; its full sequence is 1,4-alpha-glucan branching enzyme GlgB (732 aa).

Asp-408 serves as the catalytic Nucleophile. Glu-461 functions as the Proton donor in the catalytic mechanism.

It belongs to the glycosyl hydrolase 13 family. GlgB subfamily. Monomer.

It carries out the reaction Transfers a segment of a (1-&gt;4)-alpha-D-glucan chain to a primary hydroxy group in a similar glucan chain.. It participates in glycan biosynthesis; glycogen biosynthesis. Functionally, catalyzes the formation of the alpha-1,6-glucosidic linkages in glycogen by scission of a 1,4-alpha-linked oligosaccharide from growing alpha-1,4-glucan chains and the subsequent attachment of the oligosaccharide to the alpha-1,6 position. In Rhodococcus jostii (strain RHA1), this protein is 1,4-alpha-glucan branching enzyme GlgB.